The sequence spans 384 residues: Substance-K receptor (384 aa).

At methionine 1–glutamine 32 the chain is on the extracellular side. 2 N-linked (GlcNAc...) asparagine glycosylation sites follow: asparagine 11 and asparagine 19. The helical transmembrane segment at leucine 33–tryptophan 56 threads the bilayer. The Cytoplasmic portion of the chain corresponds to isoleucine 57–asparagine 69. Residues tyrosine 70 to asparagine 90 form a helical membrane-spanning segment. Over phenylalanine 91–tyrosine 107 the chain is Extracellular. The cysteines at positions 106 and 181 are disulfide-linked. Residues phenylalanine 108–alanine 129 traverse the membrane as a helical segment. Over aspartate 130–arginine 149 the chain is Cytoplasmic. Residues alanine 150–serine 170 form a helical membrane-spanning segment. Residues threonine 171 to leucine 196 are Extracellular-facing. Residues tyrosine 197 to serine 218 form a helical membrane-spanning segment. Residues valine 219–threonine 251 lie on the Cytoplasmic side of the membrane. A helical transmembrane segment spans residues methionine 252–leucine 272. Residues glycine 273–leucine 290 are Extracellular-facing. A helical transmembrane segment spans residues alanine 291–leucine 310. Residues asparagine 311 to proline 384 lie on the Cytoplasmic side of the membrane. Cysteine 324 is lipidated: S-palmitoyl cysteine.

The protein belongs to the G-protein coupled receptor 1 family.

The protein resides in the cell membrane. In terms of biological role, this is a receptor for the tachykinin neuropeptide substance K (neurokinin A). It is associated with G proteins that activate a phosphatidylinositol-calcium second messenger system. The rank order of affinity of this receptor to tachykinins is: substance K &gt; neuromedin-K &gt; substance P. The protein is Substance-K receptor (TACR2) of Bos taurus (Bovine).